A 454-amino-acid chain; its full sequence is DNA-binding protein (454 aa).

The tract at residues M1–H41 is disordered. At Y129 the chain carries Phosphotyrosine; by host. Zn(2+) contacts are provided by C213 and H215. The flexible loop stretch occupies residues V226–F260. Zn(2+)-binding residues include C268, C284, C325, C327, C378, and C394. A C-terminal arm, DBP binding region spans residues T440–F454.

It belongs to the adenoviridae E2A DNA-binding protein family. As to quaternary structure, homomultimerizes on viral ssDNA bound to pTP. Forms a initiation complex with viral polymerase, pTP and hosts NFIA and POU2F1/OCT1. Interacts with host SRCAP.

The protein resides in the host nucleus. Plays a role in the elongation phase of viral strand displacement replication by unwinding the template in an ATP-independent fashion, employing its capacity to form multimers. Also enhances the rate of initiation. Released from template upon second strand synthesis. Assembles in complex with viral pTP, viral pol, host NFIA and host POU2F1/OCT1 on viral origin of replication. Covers the whole ssDNA genome during synthesis. The complementary strand synthesis induces its relese from DNA template. May inhibit cellular transcription mediated by the interaction between host SRCAP and CBP. This Canine adenovirus serotype 1 (strain RI261) (CAdV-1) protein is DNA-binding protein.